Here is a 280-residue protein sequence, read N- to C-terminus: UDP-3-O-acyl-N-acetylglucosamine deacetylase (280 aa).

Zn(2+) is bound by residues H79, H237, and D241. The active-site Proton donor is H264.

Belongs to the LpxC family. Zn(2+) is required as a cofactor.

It catalyses the reaction a UDP-3-O-[(3R)-3-hydroxyacyl]-N-acetyl-alpha-D-glucosamine + H2O = a UDP-3-O-[(3R)-3-hydroxyacyl]-alpha-D-glucosamine + acetate. It participates in glycolipid biosynthesis; lipid IV(A) biosynthesis; lipid IV(A) from (3R)-3-hydroxytetradecanoyl-[acyl-carrier-protein] and UDP-N-acetyl-alpha-D-glucosamine: step 2/6. Catalyzes the hydrolysis of UDP-3-O-myristoyl-N-acetylglucosamine to form UDP-3-O-myristoylglucosamine and acetate, the committed step in lipid A biosynthesis. The chain is UDP-3-O-acyl-N-acetylglucosamine deacetylase from Chlamydia felis (strain Fe/C-56) (Chlamydophila felis).